Here is a 219-residue protein sequence, read N- to C-terminus: uncharacterized protein (219 aa).

A disordered region spans residues 42–71 (RQPRVVPVTSSDPEVVDDEDDEDQSDDSDE). Residues 45–54 (RVVPVTSSDP) show a composition bias toward low complexity. Residues 55-71 (EVVDDEDDEDQSDDSDE) show a composition bias toward acidic residues.

This is an uncharacterized protein from Dryophytes versicolor (chameleon treefrog).